The primary structure comprises 630 residues: Sodium-dependent serotonin transporter (630 aa).

The Cytoplasmic segment spans residues 1 to 87 (METTALNSQK…ERETWGKKVD (87 aa)). Tyr-47 is subject to Phosphotyrosine. The helical transmembrane segment at 88-112 (FLLSVIGYAVDLGNIWRFPYVCYQN) threads the bilayer. Gly-94, Ala-96, Val-97, Asp-98, and Asn-101 together coordinate Na(+). Residue Asp-98 coordinates serotonin. Over 113-115 (GGG) the chain is Extracellular. The chain crosses the membrane as a helical span at residues 116-135 (AFLLPYIIMAIFGGIPLFYM). Residues 136–160 (ELALGQYHRNGCISIWRKICPIFKG) are Cytoplasmic-facing. Tyr-142 carries the post-translational modification Phosphotyrosine. A helical transmembrane segment spans residues 161-186 (IGYTICIIAFYIASYYNTIIAWALYY). Topologically, residues 187 to 252 (LISSFTDRLP…KGLQDVGGVS (66 aa)) are extracellular. The cysteines at positions 200 and 209 are disulfide-linked. Residues Asn-208 and Asn-217 are each glycosylated (N-linked (GlcNAc...) asparagine). The helical transmembrane segment at 253-271 (WQLTLCIMLIFTIIYFSIW) threads the bilayer. Topologically, residues 272 to 277 (KGVKTS) are cytoplasmic. Thr-276 is subject to Phosphothreonine. A helical membrane pass occupies residues 278–297 (GKVVWVTATFPYIVLSVLLV). The Extracellular portion of the chain corresponds to 298–324 (RGATLPGAWKGVLFYLKPNWQKLLETG). Residues 325 to 347 (VWIDAAAQIFFSLGPGFGVLLAF) form a helical membrane-spanning segment. Ser-336 is a Na(+) binding site. Residues 348 to 360 (ASYNKFNNNCYQD) are Cytoplasmic-facing. The helical transmembrane segment at 361–380 (ALVTSAVNCMTSFVSGFVIF) threads the bilayer. Residue Asn-368 participates in Na(+) binding. The Extracellular segment spans residues 381 to 421 (TVLGYMAEMRSEDVSEVAKDAGPSLLFITYAEAIANMPAST). A helical transmembrane segment spans residues 422 to 443 (FFAIIFFLMLITLGLDSTFAGL). Residues Leu-434, Asp-437, and Ser-438 each contribute to the Na(+) site. Thr-439 contacts serotonin. At 444 to 463 (EGVITAVLDEFPHIWAKHRE) the chain is on the cytoplasmic side. A helical transmembrane segment spans residues 464 to 483 (WFVLAVVITCFFGSLTTLTF). The Extracellular segment spans residues 484 to 494 (GGAYVVKLLEE). 2 residues coordinate serotonin: Glu-494 and Tyr-495. The chain crosses the membrane as a helical span at residues 495-516 (YATGPAVLTVVFIEAIAVSWFY). The Cytoplasmic segment spans residues 517-538 (GVTQFCSDVKEMLGFSPGWFWR). A helical membrane pass occupies residues 539-558 (ICWVAVSPVFLLFIICSFLM). Serotonin contacts are provided by Phe-556 and Ser-559. Residues 559–574 (SPPQLRLFQYSYPHWS) lie on the Extracellular side of the membrane. A helical membrane pass occupies residues 575-595 (VILGYCIGTSSVICIPTYITY). Residues 596–630 (RLVTTPGTLKERIIKSITPETPTEIPCGDICLNAV) lie on the Cytoplasmic side of the membrane. The interaction with RAB4A stretch occupies residues 616-624 (TPTEIPCGD).

This sequence belongs to the sodium:neurotransmitter symporter (SNF) (TC 2.A.22) family. SLC6A4 subfamily. As to quaternary structure, monomer or homooligomer. Interacts (via C-terminus) with SCAMP2; the interaction is direct and retains transporter molecules intracellularly. Interacts with filamentous actin and STX1A. Interacts (via the N-terminus) with STX1A (via the H3 domain); this interaction regulates SLC4A6 channel conductance. Interacts with SEC23A, SEC24C and PATJ. Interacts with NOS1; the interaction may diminish the cell surface localization of SERT in the brain and, correspondingly, reduce serotonin reuptake. Interacts with TGFB1I1. Interacts with ITGAV:ITGB3. Interacts (via C-terminus) with ITGB3; this interaction regulates SLC6A4 trafficking. Phosphorylation at Thr-276 increases 5-HT uptake and is required for cGMP-mediated SERT regulation. In terms of tissue distribution, expressed in the intestinal crypt epithelial cells (at protein level).

The protein localises to the cell membrane. It is found in the endomembrane system. It localises to the endosome membrane. Its subcellular location is the synapse. The protein resides in the cell junction. The protein localises to the focal adhesion. It is found in the cell projection. It localises to the neuron projection. The catalysed reaction is serotonin(out) + K(+)(in) + Na(+)(out) + H(+)(in) = serotonin(in) + K(+)(out) + Na(+)(in) + H(+)(out). Serotonin transporter that cotransports serotonin with one Na(+) ion in exchange for one K(+) ion and possibly one proton in an overall electroneutral transport cycle. Transports serotonin across the plasma membrane from the extracellular compartment to the cytosol thus limiting serotonin intercellular signaling. Essential for serotonin homeostasis in the central nervous system. In the developing somatosensory cortex, acts in glutamatergic neurons to control serotonin uptake and its trophic functions accounting for proper spatial organization of cortical neurons and elaboration of sensory circuits. In the mature cortex, acts primarily in brainstem raphe neurons to mediate serotonin uptake from the synaptic cleft back into the pre-synaptic terminal thus terminating serotonin signaling at the synapse. Modulates mucosal serotonin levels in the gastrointestinal tract through uptake and clearance of serotonin in enterocytes. Required for enteric neurogenesis and gastrointestinal reflexes. Regulates blood serotonin levels by ensuring rapid high affinity uptake of serotonin from plasma to platelets, where it is further stored in dense granules via vesicular monoamine transporters and then released upon stimulation. Mechanistically, the transport cycle starts with an outward-open conformation having Na1(+) and Cl(-) sites occupied. The binding of a second extracellular Na2(+) ion and serotonin substrate leads to structural changes to outward-occluded to inward-occluded to inward-open, where the Na2(+) ion and serotonin are released into the cytosol. Binding of intracellular K(+) ion induces conformational transitions to inward-occluded to outward-open and completes the cycle by releasing K(+) possibly together with a proton bound to Asp-98 into the extracellular compartment. Na1(+) and Cl(-) ions remain bound throughout the transport cycle. Additionally, displays serotonin-induced channel-like conductance for monovalent cations, mainly Na(+) ions. The channel activity is uncoupled from the transport cycle and may contribute to the membrane resting potential or excitability. The chain is Sodium-dependent serotonin transporter (SLC6A4) from Cavia porcellus (Guinea pig).